The chain runs to 618 residues: Methylmalonyl-CoA mutase small subunit (618 aa).

Belongs to the methylmalonyl-CoA mutase family. In terms of assembly, heterodimer of an alpha and a beta chain. Requires adenosylcob(III)alamin as cofactor.

It catalyses the reaction (R)-methylmalonyl-CoA = succinyl-CoA. Its pathway is metabolic intermediate metabolism; propanoyl-CoA degradation; succinyl-CoA from propanoyl-CoA: step 3/3. Catalyzes the isomerization of succinyl-CoA to methylmalonyl-CoA during synthesis of propionate from tricarboxylic acid-cycle intermediates. The sequence is that of Methylmalonyl-CoA mutase small subunit (mutA) from Porphyromonas gingivalis (strain ATCC BAA-308 / W83).